Consider the following 374-residue polypeptide: MTTNTSELSAAGVSIWLDDLSRERLTSGSLQKLIDEKNVVGVTTNPSIFQAAISKGTSYEQQVSELAAQGADVEAAVFQITTQDVANACDFFAGIAVASKGVDGRVSIEVDPRKAWDTQGTIEEAKRLHAAVGKDNVHIKIPATLEGLEAITETLGAGISVNVTLIFSLGRYRAVINAFLLGIEKAKANGHDLSQIHSVASFFVSRVDTEIDKRLDALNTDEAKSLKGKAGVANARLAYQVFEEVFSSERWALLAEAGALPQRPLWASTGVKDPAYPDTLYVTELVAPNVVNTMPEKTLDATADHGVVSGNTISGRYDEANGVLNALEGLGISYNEVVALLEKEGLEKFVASWKELLDHVQDALNSAATKGSES.

Catalysis depends on K140, which acts as the Schiff-base intermediate with substrate.

Belongs to the transaldolase family. Type 2 subfamily.

The protein localises to the cytoplasm. The enzyme catalyses D-sedoheptulose 7-phosphate + D-glyceraldehyde 3-phosphate = D-erythrose 4-phosphate + beta-D-fructose 6-phosphate. Its pathway is carbohydrate degradation; pentose phosphate pathway; D-glyceraldehyde 3-phosphate and beta-D-fructose 6-phosphate from D-ribose 5-phosphate and D-xylulose 5-phosphate (non-oxidative stage): step 2/3. Transaldolase is important for the balance of metabolites in the pentose-phosphate pathway. In Renibacterium salmoninarum (strain ATCC 33209 / DSM 20767 / JCM 11484 / NBRC 15589 / NCIMB 2235), this protein is Transaldolase.